The sequence spans 310 residues: CRAL-TRIO domain-containing protein YKL091C (310 aa).

One can recognise a CRAL-TRIO domain in the interval 101–274 (ERIKLAKMYP…KYGGTSVLHN (174 aa)).

This is CRAL-TRIO domain-containing protein YKL091C from Saccharomyces cerevisiae (strain ATCC 204508 / S288c) (Baker's yeast).